We begin with the raw amino-acid sequence, 257 residues long: tRNA (cytidine/uridine/adenosine-2'-O-)-methyltransferase TrmJ (257 aa).

S-adenosyl-L-methionine is bound by residues 79–82, 115–117, Ile135, and 142–144; these read TSAR, GRE, and GSL.

It belongs to the class IV-like SAM-binding methyltransferase superfamily. RNA methyltransferase TrmH family. As to quaternary structure, homodimer.

It is found in the cytoplasm. It carries out the reaction cytidine(32) in tRNA + S-adenosyl-L-methionine = 2'-O-methylcytidine(32) in tRNA + S-adenosyl-L-homocysteine + H(+). The enzyme catalyses uridine(32) in tRNA + S-adenosyl-L-methionine = 2'-O-methyluridine(32) in tRNA + S-adenosyl-L-homocysteine + H(+). It catalyses the reaction adenosine(32) in tRNA + S-adenosyl-L-methionine = 2'-O-methyladenosine(32) in tRNA + S-adenosyl-L-homocysteine + H(+). Functionally, catalyzes the formation of 2'O-methylated cytidine (Cm32), 2'O-methylated uridine (Um32) or 2'O-methylated adenosine (Am32) at position 32 in tRNA. Confers resistance to oxidative stress. In Pseudomonas aeruginosa (strain UCBPP-PA14), this protein is tRNA (cytidine/uridine/adenosine-2'-O-)-methyltransferase TrmJ.